The chain runs to 265 residues: Deoxyguanosine kinase, mitochondrial (265 aa).

Residue 32–40 (GNIAVGKST) participates in ATP binding. 4 residues coordinate substrate: Glu57, Tyr88, Gln99, and Arg106. The active-site Proton acceptor is the Glu129. Substrate contacts are provided by Arg130 and Asp135. ATP is bound at residue 190–194 (RLQRR). Glu199 lines the substrate pocket. 242 to 244 (EDF) is a binding site for ATP.

The protein belongs to the DCK/DGK family. As to quaternary structure, homodimer.

It localises to the mitochondrion. It catalyses the reaction 2'-deoxyguanosine + ATP = dGMP + ADP + H(+). Phosphorylates deoxyguanosine in the mitochondrial matrix with high efficiency but shows very low activity against other deoxynucleosides. The chain is Deoxyguanosine kinase, mitochondrial from Xenopus laevis (African clawed frog).